Consider the following 524-residue polypeptide: MQSVQGTNAMTAPEASLPSSKKVFIKWSLLGTVGILNGYATILMYSRGEIAFALLTIILTALALFIFGSKKTYAHRYIYPGIAGMILFILFPLAYTIGLAFTNYSAKNQLSFDRAQSVLLDRTYQSGDSYPFTLYNTDQGHQIVVEKDGELLATPVFQLQGFSETDLDLAPITEAAGDKEPIKTIVKNRTALSSVDLHLPNGDDIRMSGLRKFAAVVPLYTLQEDGETLYNNRTQETLRPNMEVGYYQPVDENGQFVGSTVSPGFVVNIGTHNFERVWKDDGIKEPFISIFIWTIVFSALTVVCTLVIGLVLASVVQWEALKGRSIYRLLLILPYAVPAFISILIFKGLFNQSFGEINMLLEGLFGISPAWFSDPFMAKTMILIVNTWLGFPYMMILCMGLLKAIPDDLYEASAIDGANFITNFTRITMPMMLKPLTPLLIASFAFNFNNFVLIQLLTGGGPNMIGTSEPAGYTDLLVSYTYRIAFEGAGGQDFGLASAVATLIFLLVGALALINLRVTKVAQD.

Residues 1–22 (MQSVQGTNAMTAPEASLPSSKK) are Cytoplasmic-facing. A helical membrane pass occupies residues 23-45 (VFIKWSLLGTVGILNGYATILMY). At 46 to 49 (SRGE) the chain is on the periplasmic side. Residues 50-69 (IAFALLTIILTALALFIFGS) traverse the membrane as a helical segment. At 70–81 (KKTYAHRYIYPG) the chain is on the cytoplasmic side. The helical transmembrane segment at 82 to 104 (IAGMILFILFPLAYTIGLAFTNY) threads the bilayer. Residues 105 to 290 (SAKNQLSFDR…DGIKEPFISI (186 aa)) are Periplasmic-facing. Residues 291 to 313 (FIWTIVFSALTVVCTLVIGLVLA) traverse the membrane as a helical segment. One can recognise an ABC transmembrane type-1 domain in the interval 291 to 515 (FIWTIVFSAL…LLVGALALIN (225 aa)). The Cytoplasmic portion of the chain corresponds to 314-325 (SVVQWEALKGRS). The helical transmembrane segment at 326 to 345 (IYRLLLILPYAVPAFISILI) threads the bilayer. Over 346-379 (FKGLFNQSFGEINMLLEGLFGISPAWFSDPFMAK) the chain is Periplasmic. The chain crosses the membrane as a helical span at residues 380–402 (TMILIVNTWLGFPYMMILCMGLL). Residues 403–435 (KAIPDDLYEASAIDGANFITNFTRITMPMMLKP) lie on the Cytoplasmic side of the membrane. Residues 436 to 458 (LTPLLIASFAFNFNNFVLIQLLT) form a helical membrane-spanning segment. Residues 459-493 (GGGPNMIGTSEPAGYTDLLVSYTYRIAFEGAGGQD) lie on the Periplasmic side of the membrane. Residues 494 to 516 (FGLASAVATLIFLLVGALALINL) form a helical membrane-spanning segment. The Cytoplasmic portion of the chain corresponds to 517–524 (RVTKVAQD).

The protein belongs to the binding-protein-dependent transport system permease family. MalFG subfamily. The complex is composed of two ATP-binding proteins (MalK), two transmembrane proteins (MalG and MalF) and a solute-binding protein (MalE).

It is found in the cell inner membrane. Its function is as follows. Part of the ABC transporter complex MalEFGK involved in maltose/maltodextrin import. Probably responsible for the translocation of the substrate across the membrane. In Vibrio parahaemolyticus serotype O3:K6 (strain RIMD 2210633), this protein is Maltose/maltodextrin transport system permease protein MalF (malF).